The chain runs to 93 residues: Large ribosomal subunit protein uL23 (93 aa).

This sequence belongs to the universal ribosomal protein uL23 family. In terms of assembly, part of the 50S ribosomal subunit. Contacts protein L29, and trigger factor when it is bound to the ribosome.

In terms of biological role, one of the early assembly proteins it binds 23S rRNA. One of the proteins that surrounds the polypeptide exit tunnel on the outside of the ribosome. Forms the main docking site for trigger factor binding to the ribosome. The protein is Large ribosomal subunit protein uL23 of Helicobacter acinonychis (strain Sheeba).